A 423-amino-acid polypeptide reads, in one-letter code: Glutamyl-tRNA reductase (423 aa).

Substrate contacts are provided by residues 49-52 (TCNR), S106, 111-113 (EPQ), and Q117. The active-site Nucleophile is C50. Position 186–191 (186–191 (GAGDTS)) interacts with NADP(+).

Belongs to the glutamyl-tRNA reductase family. As to quaternary structure, homodimer.

The catalysed reaction is (S)-4-amino-5-oxopentanoate + tRNA(Glu) + NADP(+) = L-glutamyl-tRNA(Glu) + NADPH + H(+). The protein operates within porphyrin-containing compound metabolism; protoporphyrin-IX biosynthesis; 5-aminolevulinate from L-glutamyl-tRNA(Glu): step 1/2. Functionally, catalyzes the NADPH-dependent reduction of glutamyl-tRNA(Glu) to glutamate 1-semialdehyde (GSA). The polypeptide is Glutamyl-tRNA reductase (Idiomarina loihiensis (strain ATCC BAA-735 / DSM 15497 / L2-TR)).